Consider the following 201-residue polypeptide: MSGRSVRAETRSRAKDDIKRVMAAIEKVRKWEKKWVTVGDTSLRIYKWVPVTEPKSDDNKNKKKGKDDKYGSEVTTPENSSSPGMMDMHDDNSNQSSIADSSPLKQETSNNTSPAPEPMAASQNDSSDLKNDQYPSKQPSSGQDHKSEQNHCSSESMTSKRDSKSQGDSESFLDSSKSAQELEDGAPPSKKGKIDSSSEES.

Residues 46–201 form a disordered region; it reads YKWVPVTEPK…GKIDSSSEES (156 aa). Basic and acidic residues predominate over residues 54-71; sequence PKSDDNKNKKKGKDDKYG. Composition is skewed to polar residues over residues 73–83, 93–114, and 133–142; these read EVTTPENSSSP, SNQS…NTSP, and QYPSKQPSSG. The segment covering 158–167 has biased composition (basic and acidic residues); it reads TSKRDSKSQG. The span at 168–179 shows a compositional bias: polar residues; sequence DSESFLDSSKSA. A compositionally biased stretch (basic and acidic residues) spans 192 to 201; the sequence is GKIDSSSEES.

This sequence belongs to the BCL7 family.

The polypeptide is B-cell CLL/lymphoma 7 protein family member A (bcl7a) (Danio rerio (Zebrafish)).